We begin with the raw amino-acid sequence, 151 residues long: Peptide methionine sulfoxide reductase MsrB (151 aa).

The region spanning 9–132 is the MsrB domain; the sequence is DGELKRTLTK…NSAALKFIPF (124 aa). Cysteine 121 acts as the Nucleophile in catalysis.

This sequence belongs to the MsrB Met sulfoxide reductase family.

The catalysed reaction is L-methionyl-[protein] + [thioredoxin]-disulfide + H2O = L-methionyl-(R)-S-oxide-[protein] + [thioredoxin]-dithiol. The polypeptide is Peptide methionine sulfoxide reductase MsrB (Mycoplasma pneumoniae (strain ATCC 29342 / M129 / Subtype 1) (Mycoplasmoides pneumoniae)).